Here is a 324-residue protein sequence, read N- to C-terminus: Putative glycosyltransferase R655 (324 aa).

Belongs to the glycosyltransferase 25 family.

This chain is Putative glycosyltransferase R655, found in Acanthamoeba polyphaga (Amoeba).